A 331-amino-acid chain; its full sequence is Probable deacetylase MTH_1194 (331 aa).

Residue His-118 is the Proton donor/acceptor of the active site. Zn(2+) is bound by residues Asp-155, His-157, and Asp-244.

Belongs to the histone deacetylase family. Zn(2+) is required as a cofactor.

Probable deacetylase. The protein is Probable deacetylase MTH_1194 of Methanothermobacter thermautotrophicus (strain ATCC 29096 / DSM 1053 / JCM 10044 / NBRC 100330 / Delta H) (Methanobacterium thermoautotrophicum).